Consider the following 220-residue polypeptide: Large ribosomal subunit protein uL3 (220 aa).

The tract at residues 126–158 (GFQGAIKRHGQSRGPMSHGSRYHRRPGSMGMAS) is disordered.

It belongs to the universal ribosomal protein uL3 family. In terms of assembly, part of the 50S ribosomal subunit. Forms a cluster with proteins L14 and L19.

Its function is as follows. One of the primary rRNA binding proteins, it binds directly near the 3'-end of the 23S rRNA, where it nucleates assembly of the 50S subunit. This is Large ribosomal subunit protein uL3 from Macrococcus caseolyticus (strain JCSC5402) (Macrococcoides caseolyticum).